The following is an 882-amino-acid chain: Alanine--tRNA ligase (882 aa).

Zn(2+) is bound by residues His568, His572, Cys670, and His674.

It belongs to the class-II aminoacyl-tRNA synthetase family. Zn(2+) serves as cofactor.

It localises to the cytoplasm. It catalyses the reaction tRNA(Ala) + L-alanine + ATP = L-alanyl-tRNA(Ala) + AMP + diphosphate. Functionally, catalyzes the attachment of alanine to tRNA(Ala) in a two-step reaction: alanine is first activated by ATP to form Ala-AMP and then transferred to the acceptor end of tRNA(Ala). Also edits incorrectly charged Ser-tRNA(Ala) and Gly-tRNA(Ala) via its editing domain. In Lactobacillus johnsonii (strain CNCM I-12250 / La1 / NCC 533), this protein is Alanine--tRNA ligase.